Consider the following 570-residue polypeptide: Ribosome-inactivating protein SNAI (570 aa).

An N-terminal signal peptide occupies residues 1 to 28; it reads MRLVAKLLYLAVLAICGLGIHGALTHPR. Asn-40, Asn-62, and Asn-144 each carry an N-linked (GlcNAc...) asparagine glycan. Glu-199 is an active-site residue. A glycan (N-linked (GlcNAc...) asparagine) is linked at Asn-260. Disulfide bonds link Cys-284–Cys-316, Cys-332–Cys-351, and Cys-373–Cys-385. 2 consecutive Ricin B-type lectin domains span residues 319–439 and 441–566; these read VEVT…WTVG and VEPL…WITT. The 1-alpha repeat unit spans residues 329-369; the sequence is DGLCVDVRYGHYIDGNPVQLRPCGNECNQLWTFRTDGTIRW. One copy of the 1-beta repeat lies at 370–405; it reads LGKCLTASSSVMIYDCNTVPPEATKWVVSIDGTITN. The 1-gamma repeat unit spans residues 408–440; sequence SGLVLTAPQAAEGTALSLENNIHAARQGWTVGD. The stretch at 452–489 is one 2-alpha repeat; it reads KQMCLRENGENNFVWLEDCVLNRVQQEWALYGDGTIRV. Cys-455 and Cys-470 form a disulfide bridge. Asn-492 carries an N-linked (GlcNAc...) asparagine glycan. One copy of the 2-beta repeat lies at 493 to 531; that stretch reads RSLCVTSEDHEPSDLIVILKCEGSGNQRWVFNTNGTISN. Cysteines 496 and 513 form a disulfide. Asn-526 carries N-linked (GlcNAc...) asparagine glycosylation. A 2-gamma repeat occupies 534–567; that stretch reads AKLLMDVAQRDVSLRKIILYRPTGNPNQQWITTT.

The protein belongs to the ribosome-inactivating protein family. Type 2 RIP subfamily. Tetramer of four pairs of disulfide bound A-B chains. Post-translationally, the precursor is processed in two chains, A and B, that are linked by a disulfide bond. A small truncated form corresponding roughly to the second ricin B-type lectin domain of the B chain, TrSNAI, can also be produced. Glycosylated. N-glycans of subunit A are (Man)2-3(Xyl)(GlcNAc)2(Fuc) at Asn-40, (GlcNAc)0-2(Man)3(Xyl)(GlcNAc)2(Fuc) or (Man)1-2(GlcNAc)2 at Asn-62, (Man)3(Xyl)(GlcNAc)2(Fuc)0-1 at Asn-144 and (GlcNAc)0-1(Man)3(Xyl)(GlcNAc)2(Fuc) at Asn-260. N-glycans of subunit B are (Man)3(Xyl)(GlcNAc)2(Fuc) at Asn-492 and (Man)6-9(GlcNAc)2 at Asn-526. Expressed in bark.

The enzyme catalyses Endohydrolysis of the N-glycosidic bond at one specific adenosine on the 28S rRNA.. Its function is as follows. Neu5Ac(alpha2-6)Gal/GalNAc specific agglutinin. Behaves as a type-2 ribosome-inactivating protein. Strongly inhibits mammalian but not plant ribosomes. The A chain is responsible for inhibiting protein synthesis through the catalytic inactivation of 60S ribosomal subunits by removing adenine from position 4,324 of 28S rRNA. The B chain binds to cell receptors and probably facilitates the entry into the cell of the A chain; B chains are also responsible for cell agglutination (lectin activity). Involved in plant defense against insects. Functionally, binds Neu5Ac(alpha2-6)Gal/GalNAc but has no clear agglutination activity. This chain is Ribosome-inactivating protein SNAI, found in Sambucus nigra (European elder).